A 235-amino-acid chain; its full sequence is Demethylmenaquinone methyltransferase (235 aa).

S-adenosyl-L-methionine contacts are provided by residues Thr58, Asp79, and 106 to 107 (NA).

Belongs to the class I-like SAM-binding methyltransferase superfamily. MenG/UbiE family.

The enzyme catalyses a 2-demethylmenaquinol + S-adenosyl-L-methionine = a menaquinol + S-adenosyl-L-homocysteine + H(+). Its pathway is quinol/quinone metabolism; menaquinone biosynthesis; menaquinol from 1,4-dihydroxy-2-naphthoate: step 2/2. Methyltransferase required for the conversion of demethylmenaquinol (DMKH2) to menaquinol (MKH2). The chain is Demethylmenaquinone methyltransferase from Shouchella clausii (strain KSM-K16) (Alkalihalobacillus clausii).